The following is a 66-amino-acid chain: Toxin Boma6a (66 aa).

In terms of domain architecture, LCN-type CS-alpha/beta spans 2-64 (RDAYIAQNYN…VPIKVEGKCH (63 aa)). Disulfide bonds link C12–C63, C16–C36, C22–C46, and C26–C48.

This sequence belongs to the long (4 C-C) scorpion toxin superfamily. Sodium channel inhibitor family. Alpha subfamily. Expressed by the venom gland.

Its subcellular location is the secreted. Functionally, alpha toxins bind voltage-independently at site-3 of sodium channels (Nav) and inhibit the inactivation of the activated channels, thereby blocking neuronal transmission. This Buthus occitanus mardochei (Moroccan scorpion) protein is Toxin Boma6a.